The sequence spans 631 residues: Iron transport multicopper oxidase FET3 (631 aa).

An N-terminal signal peptide occupies residues 1–25 (MKVSTHHFLPSLLVALWSWATVAQA). Over 26-564 (ATHTFNWTTG…ANIPDGFTAK (539 aa)) the chain is Extracellular. Residues Asn31 and Asn81 are each glycosylated (N-linked (GlcNAc...) asparagine). 2 Plastocyanin-like domains span residues 50–148 (ITCN…LVVE) and 195–297 (NLII…LMLN). Residues His85 and His87 each contribute to the Cu cation site. 2 N-linked (GlcNAc...) asparagine glycosylation sites follow: Asn92 and Asn117. Residues His130 and His132 each coordinate Cu cation. Residues Asn199, Asn203, Asn249, Asn270, Asn297, Asn364, and Asn413 are each glycosylated (N-linked (GlcNAc...) asparagine). The 120-residue stretch at 387–506 (NPLVYGTNTN…QGLALLLIEA (120 aa)) folds into the Plastocyanin-like 3 domain. Cu cation is bound by residues His418, His421, His423, His488, Cys489, His490, and His494. A helical transmembrane segment spans residues 565-585 (GIVAMTFSCLAGVLGLISLST). Residues 586–630 (YGLMGVKKSEEEIIRDLGMDPDAVEKVDVSDINSDEDSSRTSKNI) lie on the Cytoplasmic side of the membrane. The disordered stretch occupies residues 610–631 (EKVDVSDINSDEDSSRTSKNIE). A compositionally biased stretch (basic and acidic residues) spans 622 to 631 (DSSRTSKNIE).

This sequence belongs to the multicopper oxidase family. Requires Cu cation as cofactor.

The protein localises to the cell membrane. Iron transport multicopper ferroxidase required for Fe(2+) high affinity uptake. Required to oxidize Fe(2+) and release it from the transporter. Essential component of copper-dependent iron transport. This is Iron transport multicopper oxidase FET3 (FET3) from Kluyveromyces lactis (strain ATCC 8585 / CBS 2359 / DSM 70799 / NBRC 1267 / NRRL Y-1140 / WM37) (Yeast).